Consider the following 557-residue polypeptide: Dihydroxy-acid dehydratase (557 aa).

Asp78 lines the Mg(2+) pocket. [2Fe-2S] cluster is bound at residue Cys119. 2 residues coordinate Mg(2+): Asp120 and Lys121. Position 121 is an N6-carboxylysine (Lys121). Position 191 (Cys191) interacts with [2Fe-2S] cluster. Glu442 provides a ligand contact to Mg(2+). Ser468 functions as the Proton acceptor in the catalytic mechanism.

It belongs to the IlvD/Edd family. As to quaternary structure, homodimer. It depends on [2Fe-2S] cluster as a cofactor. Mg(2+) serves as cofactor.

It catalyses the reaction (2R)-2,3-dihydroxy-3-methylbutanoate = 3-methyl-2-oxobutanoate + H2O. It carries out the reaction (2R,3R)-2,3-dihydroxy-3-methylpentanoate = (S)-3-methyl-2-oxopentanoate + H2O. It participates in amino-acid biosynthesis; L-isoleucine biosynthesis; L-isoleucine from 2-oxobutanoate: step 3/4. It functions in the pathway amino-acid biosynthesis; L-valine biosynthesis; L-valine from pyruvate: step 3/4. Functionally, functions in the biosynthesis of branched-chain amino acids. Catalyzes the dehydration of (2R,3R)-2,3-dihydroxy-3-methylpentanoate (2,3-dihydroxy-3-methylvalerate) into 2-oxo-3-methylpentanoate (2-oxo-3-methylvalerate) and of (2R)-2,3-dihydroxy-3-methylbutanoate (2,3-dihydroxyisovalerate) into 2-oxo-3-methylbutanoate (2-oxoisovalerate), the penultimate precursor to L-isoleucine and L-valine, respectively. This is Dihydroxy-acid dehydratase from Lachnospira eligens (strain ATCC 27750 / DSM 3376 / VPI C15-48 / C15-B4) (Eubacterium eligens).